We begin with the raw amino-acid sequence, 157 residues long: Transcription elongation factor GreA (157 aa).

Over residues 25–43 the composition is skewed to basic and acidic residues; the sequence is EGRAKVAEQLSEARDKGDL. The interval 25–47 is disordered; the sequence is EGRAKVAEQLSEARDKGDLSENA. Positions 43-79 form a coiled coil; the sequence is LSENAEYDAAKEAQEILERRIAKLEELMINARVINKD.

This sequence belongs to the GreA/GreB family.

Necessary for efficient RNA polymerase transcription elongation past template-encoded arresting sites. The arresting sites in DNA have the property of trapping a certain fraction of elongating RNA polymerases that pass through, resulting in locked ternary complexes. Cleavage of the nascent transcript by cleavage factors such as GreA or GreB allows the resumption of elongation from the new 3'terminus. GreA releases sequences of 2 to 3 nucleotides. The polypeptide is Transcription elongation factor GreA (Amoebophilus asiaticus (strain 5a2)).